The sequence spans 81 residues: MPKADIHPTWYPDAKVTCNGEVIMTVGSTKPEINVEIWSGNHPFYTGTQKIIDTEGRVDRFMRKYGMKEKTTGDKQDKKKK.

It belongs to the bacterial ribosomal protein bL31 family. Type A subfamily. In terms of assembly, part of the 50S ribosomal subunit.

Its function is as follows. Binds the 23S rRNA. The chain is Large ribosomal subunit protein bL31 from Synechocystis sp. (strain ATCC 27184 / PCC 6803 / Kazusa).